The sequence spans 510 residues: MSGWPVLPALLLAVAMSSFHSATSRDEERNRLLMREKMMQVGGQLVLQEEEERANGRLQALKEAEMQEAKRTGIFPPSLHFFQAKGLMEKSAVFNILKKMPKGAALHVHDFGMVSMDWLVKNATYRPYCYFCLTPKGATQFKFAHPPPPTPKQEECSEWVLLEKFRKGLPNVTEFDNSLLRTFTLMTENPQETYANQDMVWKKFKTIFFAISGLVNYAPVFRDFIFLGLEEFYQDQVLYLELRAMLYPVYELNGMVHSREWSVRTYEEVARTFAKTHPGFIGIKLIYSDHRSKDVSLIKESVQRAMELRAKFPQMVAGFDLVGREDTGHSLYDYKEALMIPASRGVKLPYFFHAGETDWQGTSADRNLLDALILNSTRIGHGFALSKHPAVWADAWRKDIPLEVCPISNQVLKLVSDLRNHPAAVLMATGYPMVISSDDPAAFGAKGLSYDFYEAFMGLGGLTADLRTLKQLAMNSIRYSALSETEKKVAMETWEERWHRFVAELTRGPK.

The signal sequence occupies residues 1–24 (MSGWPVLPALLLAVAMSSFHSATS). A dimerization region spans residues 25-95 (RDEERNRLLM…GLMEKSAVFN (71 aa)). The Zn(2+) site is built by His107 and His109. Residue Asp110 participates in substrate binding. A glycan (N-linked (GlcNAc...) asparagine) is linked at Asn122. Residues 122-182 (NATYRPYCYF…TEFDNSLLRT (61 aa)) are PRB domain. Cysteines 132 and 156 form a disulfide. An N-linked (GlcNAc...) asparagine glycan is attached at Asn171. Residues 201 to 208 (WKKFKTIF), His290, and Gly323 contribute to the substrate site. His353 is a Zn(2+) binding site. Glu356 functions as the Proton donor in the catalytic mechanism. The N-linked (GlcNAc...) asparagine glycan is linked to Asn375. His381 acts as the Proton acceptor in catalysis. Asp438 contacts Zn(2+). Asp439 is a substrate binding site.

The protein belongs to the metallo-dependent hydrolases superfamily. Adenosine and AMP deaminases family. ADGF subfamily. Homodimer. Interacts with adenosine receptors. Binds heparin. It depends on Zn(2+) as a cofactor.

It localises to the secreted. It carries out the reaction adenosine + H2O + H(+) = inosine + NH4(+). Its function is as follows. Adenosine deaminase that may contribute to the degradation of extracellular adenosine, a signaling molecule that controls a variety of cellular responses. Requires elevated adenosine levels for optimal enzyme activity. Binds to cell surfaces via proteoglycans and may play a role in the regulation of cell proliferation and differentiation, independently of its enzyme activity. The sequence is that of Adenosine deaminase 2 from Sus scrofa (Pig).